The following is a 2214-amino-acid chain: Genome polyprotein (2214 aa).

Disordered regions lie at residues Met1–Gly21 and Lys600–Gln619. Residue Gly2 is the site of N-myristoyl glycine; by host attachment. At Gly2–Gln1525 the chain is on the cytoplasmic side. Amphipathic alpha-helix stretches follow at residues Gln580–Pro601 and Gly581–Pro601. The span at Thr606–Gln619 shows a compositional bias: polar residues. Residues His906 and Asp924 each act as for protease 2A activity in the active site. Positions 941 and 943 each coordinate Zn(2+). Cys995 functions as the For protease 2A activity in the catalytic mechanism. Positions 1001 and 1003 each coordinate Zn(2+). Positions Gly1133–Gln1205 are membrane-binding. The tract at residues Gly1133–Thr1271 is oligomerization. The tract at residues Ser1154–Ser1158 is RNA-binding. The 157-residue stretch at Glu1237–Asn1393 folds into the SF3 helicase domain. Gly1261–Ser1268 is a binding site for ATP. Zn(2+) is bound by residues Cys1401, Cys1404, Cys1413, and Cys1418. The C4-type zinc-finger motif lies at Cys1401 to Cys1418. Residues Glu1445 to Ile1452 form an RNA-binding region. Residues Met1456 to Gln1461 form an oligomerization region. The stretch at Ala1526–Tyr1541 is an intramembrane region. The Cytoplasmic segment spans residues Lys1542–Phe2214. O-(5'-phospho-RNA)-tyrosine is present on Tyr1551. Residues Gly1571–Phe1749 enclose the Peptidase C3 domain. Residues His1610, Glu1641, and Cys1717 each act as for protease 3C activity in the active site. The region spanning Glu1980–Leu2095 is the RdRp catalytic domain. Mg(2+)-binding residues include Asp1986 and Asp2081.

It belongs to the picornaviruses polyprotein family. In terms of assembly, interacts with capsid protein VP1 and capsid protein VP3 to form heterotrimeric protomers. Interacts with capsid protein VP0, and capsid protein VP3 to form heterotrimeric protomers. Five protomers subsequently associate to form pentamers which serve as building blocks for the capsid. Interacts with capsid protein VP2, capsid protein VP3 and capsid protein VP4 following cleavage of capsid protein VP0. As to quaternary structure, interacts with capsid protein VP1 and capsid protein VP3 in the mature capsid. In terms of assembly, interacts with capsid protein VP0 and capsid protein VP1 to form heterotrimeric protomers. Five protomers subsequently associate to form pentamers which serve as building blocks for the capsid. Interacts with capsid protein VP4 in the mature capsid. Interacts with protein 2C; this interaction may be important for virion morphogenesis. Interacts with capsid protein VP1 and capsid protein VP3. As to quaternary structure, homodimer. In terms of assembly, homohexamer; forms a hexameric ring structure with 6-fold symmetry characteristic of AAA+ ATPases. Interacts (via N-terminus) with host RTN3 (via reticulon domain); this interaction is important for viral replication. Interacts with capsid protein VP3; this interaction may be important for virion morphogenesis. Interacts with protein 3CD. As to quaternary structure, homodimer. Interacts with host GBF1. Interacts (via GOLD domain) with host ACBD3 (via GOLD domain); this interaction allows the formation of a viral protein 3A/ACBD3 heterotetramer with a 2:2 stoichiometry, which will stimulate the recruitment of host PI4KB in order to synthesize PI4P at the viral RNA replication sites. In terms of assembly, interacts with RNA-directed RNA polymerase. Interacts with protein 3AB and with RNA-directed RNA polymerase. As to quaternary structure, interacts with Viral protein genome-linked and with protein 3CD. Requires Mg(2+) as cofactor. Specific enzymatic cleavages in vivo by the viral proteases yield processing intermediates and the mature proteins. Post-translationally, myristoylation is required for the formation of pentamers during virus assembly. Further assembly of 12 pentamers and a molecule of genomic RNA generates the provirion. In terms of processing, during virion maturation, immature virions are rendered infectious following cleavage of VP0 into VP4 and VP2. This maturation seems to be an autocatalytic event triggered by the presence of RNA in the capsid and it is followed by a conformational change infectious virion. Myristoylation is required during RNA encapsidation and formation of the mature virus particle. Post-translationally, VPg is uridylylated by the polymerase into VPg-pUpU. This acts as a nucleotide-peptide primer for the genomic RNA replication.

It localises to the virion. The protein localises to the host cytoplasm. Its subcellular location is the host cytoplasmic vesicle membrane. It is found in the host nucleus. It carries out the reaction a ribonucleoside 5'-triphosphate + H2O = a ribonucleoside 5'-diphosphate + phosphate + H(+). The enzyme catalyses Selective cleavage of Tyr-|-Gly bond in the picornavirus polyprotein.. The catalysed reaction is RNA(n) + a ribonucleoside 5'-triphosphate = RNA(n+1) + diphosphate. It catalyses the reaction Selective cleavage of Gln-|-Gly bond in the poliovirus polyprotein. In other picornavirus reactions Glu may be substituted for Gln, and Ser or Thr for Gly.. Replication or transcription is subject to high level of random mutations by the nucleotide analog ribavirin. Functionally, forms an icosahedral capsid of pseudo T=3 symmetry with capsid proteins VP2 and VP3. The capsid is 300 Angstroms in diameter, composed of 60 copies of each capsid protein and enclosing the viral positive strand RNA genome. Capsid protein VP1 mainly forms the vertices of the capsid. Capsid protein VP1 interacts with host cell receptor to provide virion attachment to target host cells. This attachment induces virion internalization. Tyrosine kinases are probably involved in the entry process. After binding to its receptor, the capsid undergoes conformational changes. Capsid protein VP1 N-terminus (that contains an amphipathic alpha-helix) and capsid protein VP4 are externalized. Together, they shape a pore in the host membrane through which viral genome is translocated to host cell cytoplasm. In terms of biological role, forms an icosahedral capsid of pseudo T=3 symmetry with capsid proteins VP2 and VP3. The capsid is 300 Angstroms in diameter, composed of 60 copies of each capsid protein and enclosing the viral positive strand RNA genome. Its function is as follows. Lies on the inner surface of the capsid shell. After binding to the host receptor, the capsid undergoes conformational changes. Capsid protein VP4 is released, Capsid protein VP1 N-terminus is externalized, and together, they shape a pore in the host membrane through which the viral genome is translocated into the host cell cytoplasm. Component of immature procapsids, which is cleaved into capsid proteins VP4 and VP2 after maturation. Allows the capsid to remain inactive before the maturation step. Functionally, cysteine protease that cleaves viral polyprotein and specific host proteins. It is responsible for the autocatalytic cleavage between the P1 and P2 regions, which is the first cleavage occurring in the polyprotein. Also cleaves the host translation initiation factor EIF4G1, in order to shut down the capped cellular mRNA translation. Inhibits the host nucleus-cytoplasm protein and RNA trafficking by cleaving host members of the nuclear pores. Counteracts stress granule formation probably by antagonizing its assembly or promoting its dissassembly. Cleaves and inhibits host IFIH1/MDA5, thereby inhibiting the type-I IFN production and the establishment of the antiviral state. Cleaves and inhibits host MAVS, thereby inhibiting the type-I IFN production and the establishment of the antiviral state. In terms of biological role, plays an essential role in the virus replication cycle by acting as a viroporin. Creates a pore in the host endoplasmic reticulum and as a consequence releases Ca2+ in the cytoplasm of infected cell. In turn, high levels of cytoplasmic calcium may trigger membrane trafficking and transport of viral ER-associated proteins to viroplasms, sites of viral genome replication. Its function is as follows. Induces and associates with structural rearrangements of intracellular membranes. Displays RNA-binding, nucleotide binding and NTPase activities. May play a role in virion morphogenesis and viral RNA encapsidation by interacting with the capsid protein VP3. Localizes the viral replication complex to the surface of membranous vesicles. Together with protein 3CD binds the Cis-Active RNA Element (CRE) which is involved in RNA synthesis initiation. Acts as a cofactor to stimulate the activity of 3D polymerase, maybe through a nucleid acid chaperone activity. Functionally, localizes the viral replication complex to the surface of membranous vesicles. It inhibits host cell endoplasmic reticulum-to-Golgi apparatus transport and causes the disassembly of the Golgi complex, possibly through GBF1 interaction. This would result in depletion of MHC, trail receptors and IFN receptors at the host cell surface. Plays an essential role in viral RNA replication by recruiting ACBD3 and PI4KB at the viral replication sites, thereby allowing the formation of the rearranged membranous structures where viral replication takes place. In terms of biological role, acts as a primer for viral RNA replication and remains covalently bound to viral genomic RNA. VPg is uridylylated prior to priming replication into VPg-pUpU. The oriI viral genomic sequence may act as a template for this. The VPg-pUpU is then used as primer on the genomic RNA poly(A) by the RNA-dependent RNA polymerase to replicate the viral genome. During genome replication, the VPg-RNA linkage is removed by the host TDP2, thereby accelerating replication. During the late stage of the replication cycle, host TDP2 is excluded from sites of viral RNA synthesis and encapsidation, allowing for the generation of progeny virions. Its function is as follows. Involved in the viral replication complex and viral polypeptide maturation. It exhibits protease activity with a specificity and catalytic efficiency that is different from protease 3C. Protein 3CD lacks polymerase activity. Protein 3CD binds to the 5'UTR of the viral genome. Replicates the viral genomic RNA on the surface of intracellular membranes. May form linear arrays of subunits that propagate along a strong head-to-tail interaction called interface-I. Covalently attaches UMP to a tyrosine of VPg, which is used to prime RNA synthesis. The positive stranded RNA genome is first replicated at virus induced membranous vesicles, creating a dsRNA genomic replication form. This dsRNA is then used as template to synthesize positive stranded RNA genomes. ss(+)RNA genomes are either translated, replicated or encapsidated. Functionally, major viral protease that mediates proteolytic processing of the polyprotein. Cleaves host EIF5B, contributing to host translation shutoff. Also cleaves host PABPC1, contributing to host translation shutoff. Cleaves host NLRP1, triggers host N-glycine-mediated degradation of the autoinhibitory NLRP1 N-terminal fragment. This Coxsackievirus A24 (strain EH24/70) protein is Genome polyprotein.